Consider the following 217-residue polypeptide: ATP-dependent Clp protease proteolytic subunit (217 aa).

The active-site Nucleophile is the serine 120. Histidine 145 is an active-site residue.

It belongs to the peptidase S14 family. As to quaternary structure, fourteen ClpP subunits assemble into 2 heptameric rings which stack back to back to give a disk-like structure with a central cavity, resembling the structure of eukaryotic proteasomes.

It localises to the cytoplasm. The enzyme catalyses Hydrolysis of proteins to small peptides in the presence of ATP and magnesium. alpha-casein is the usual test substrate. In the absence of ATP, only oligopeptides shorter than five residues are hydrolyzed (such as succinyl-Leu-Tyr-|-NHMec, and Leu-Tyr-Leu-|-Tyr-Trp, in which cleavage of the -Tyr-|-Leu- and -Tyr-|-Trp bonds also occurs).. In terms of biological role, cleaves peptides in various proteins in a process that requires ATP hydrolysis. Has a chymotrypsin-like activity. Plays a major role in the degradation of misfolded proteins. The sequence is that of ATP-dependent Clp protease proteolytic subunit from Ralstonia nicotianae (strain ATCC BAA-1114 / GMI1000) (Ralstonia solanacearum).